The primary structure comprises 525 residues: Protein disulfide-isomerase A2 (525 aa).

The first 21 residues, 1–21 (MSRQLLPVLLLLLLRASCPWG), serve as a signal peptide directing secretion. The 126-residue stretch at 27 to 152 (RSPSEEPPEE…IAEWLRRRVG (126 aa)) folds into the Thioredoxin 1 domain. Active-site nucleophile residues include cysteine 71 and cysteine 74. A disulfide bridge links cysteine 71 with cysteine 74. N-linked (GlcNAc...) asparagine glycosylation is found at asparagine 127 and asparagine 284. The region spanning 367-496 (VLNGQVKPYL…FSKFLDNGGV (130 aa)) is the Thioredoxin 2 domain. Catalysis depends on nucleophile residues cysteine 418 and cysteine 421. A disulfide bridge connects residues cysteine 418 and cysteine 421. Positions 492–525 (DNGGVLPTEEPPEEPAAPFPEPPANSTMGSKEEL) are disordered. Residues 505–514 (EPAAPFPEPP) are compositionally biased toward pro residues. A glycan (N-linked (GlcNAc...) asparagine) is linked at asparagine 516. The span at 516 to 525 (NSTMGSKEEL) shows a compositional bias: polar residues. Residues 522–525 (KEEL) carry the Prevents secretion from ER motif.

Belongs to the protein disulfide isomerase family. In terms of assembly, monomer; predominantly as monomer under reducing conditions. Homodimer; disulfide-linked. Part of a large chaperone multiprotein complex comprising DNAJB11, HSP90B1, HSPA5, HYOU, PDIA2, PDIA4, PDIA6, PPIB, SDF2L1, UGGT1 and very small amounts of ERP29, but not, or at very low levels, CALR nor CANX. In terms of processing, the disulfide-linked homodimer exhibits an enhanced chaperone activity. Glycosylated. In terms of tissue distribution, highly expressed in pancreas (at protein level).

It localises to the endoplasmic reticulum lumen. The catalysed reaction is Catalyzes the rearrangement of -S-S- bonds in proteins.. In terms of biological role, acts as an intracellular estrogen-binding protein. May be involved in modulating cellular levels and biological functions of estrogens in the pancreas. May act as a chaperone that inhibits aggregation of misfolded proteins. In Homo sapiens (Human), this protein is Protein disulfide-isomerase A2 (PDIA2).